The chain runs to 33 residues: Brevinin-2DYb (33 aa).

Cys27 and Cys33 are oxidised to a cystine.

In terms of tissue distribution, expressed by the skin glands.

The protein localises to the secreted. In terms of biological role, antimicrobial peptide. Active against the Gram-positive bacterium S.aureus (MIC=30 uM) and the Gram-negative bacterium E.coli (MIC=30 uM). The protein is Brevinin-2DYb of Rana dybowskii (Dybovsky's frog).